The sequence spans 189 residues: Putative manganese efflux pump MntP (189 aa).

6 consecutive transmembrane segments (helical) span residues 3–23 (LSATLILAFGMSMDAFAASIG), 41–61 (LIFGVVEAITPIIGWGIGLFA), 65–85 (IMEWDHWVAFSLLFILGMRMI), 103–123 (GFWLLVATAIATSLDAMAIGV), 132–152 (IVHTAMAIGCATMIMATLGMM), and 167–187 (ILGGVVLIGIGVNILLEHLGY).

Belongs to the MntP (TC 9.B.29) family.

The protein resides in the cell inner membrane. In terms of biological role, probably functions as a manganese efflux pump. The chain is Putative manganese efflux pump MntP from Serratia proteamaculans (strain 568).